Consider the following 141-residue polypeptide: Hemoglobin subunit alpha-A (141 aa).

The Globin domain maps to V1 to R141. An O2-binding site is contributed by H58. H87 provides a ligand contact to heme b.

This sequence belongs to the globin family. In terms of assembly, heterotetramer of two alpha chains and two beta chains. In terms of tissue distribution, red blood cells.

Involved in oxygen transport from the lung to the various peripheral tissues. This chain is Hemoglobin subunit alpha-A (HBAA), found in Cygnus olor (Mute swan).